Here is a 2715-residue protein sequence, read N- to C-terminus: Teneurin-3 (2715 aa).

Disordered stretches follow at residues Met-1–Gln-38 and Gly-142–Pro-223. A Teneurin N-terminal domain is found at Met-1–Cys-309. The Cytoplasmic portion of the chain corresponds to Met-1–Thr-310. Over residues Gly-142–Ser-153 the composition is skewed to low complexity. Residues Asp-159–Ser-168 show a composition bias toward basic and acidic residues. A compositionally biased stretch (polar residues) spans Glu-171–Leu-182. A compositionally biased stretch (low complexity) spans Thr-201–Asn-213. Residues Ala-311 to Met-331 traverse the membrane as a helical segment. At His-332 to Arg-2715 the chain is on the extracellular side. 3 N-linked (GlcNAc...) asparagine glycosylation sites follow: Asn-345, Asn-380, and Asn-419. EGF-like domains follow at residues Ser-514–Ser-545, Arg-546–Asp-576, Pro-578–Glu-610, Glu-611–Glu-642, Leu-644–Ser-677, Asn-678–Gln-709, Arg-710–Thr-739, and Ile-740–Asp-783. Cystine bridges form between Cys-518-Cys-528, Cys-522-Cys-533, Cys-535-Cys-544, Cys-553-Cys-564, Cys-566-Cys-575, Cys-582-Cys-593, Cys-587-Cys-598, Cys-600-Cys-609, Cys-614-Cys-625, Cys-619-Cys-630, Cys-632-Cys-641, Cys-652-Cys-665, Cys-667-Cys-676, Cys-681-Cys-691, Cys-685-Cys-696, Cys-698-Cys-707, Cys-712-Cys-722, Cys-716-Cys-727, Cys-729-Cys-738, Cys-752-Cys-762, Cys-756-Cys-771, and Cys-773-Cys-782. Asn-670 carries N-linked (GlcNAc...) asparagine glycosylation. N-linked (GlcNAc...) asparagine glycans are attached at residues Asn-869 and Asn-892. Residues Leu-1181–Ser-1209 form an NHL 1 repeat. Asn-1211 is a glycosylation site (N-linked (GlcNAc...) asparagine). NHL repeat units lie at residues Leu-1216 to Leu-1260, Ala-1286 to Ile-1330, Cys-1347 to Asn-1387, Leu-1418 to Ile-1445, and Cys-1474 to Asn-1517. The YD 1 repeat unit spans residues Tyr-1527–His-1546. 2 N-linked (GlcNAc...) asparagine glycosylation sites follow: Asn-1543 and Asn-1560. 3 YD repeats span residues Tyr-1563–Arg-1583, Tyr-1626–Phe-1645, and Phe-1646–His-1668. N-linked (GlcNAc...) asparagine glycosylation is found at Asn-1656, Asn-1693, Asn-1751, and Asn-1836. 18 YD repeats span residues Tyr-1839–Asp-1858, Tyr-1880–Glu-1898, Tyr-1899–Gln-1919, Tyr-1926–Asp-1943, Tyr-1944–Lys-1965, Tyr-1966–Ser-1983, Tyr-1986–Thr-2006, Tyr-2009–Val-2029, Tyr-2037–Pro-2056, Phe-2062–Tyr-2079, Tyr-2080–Ile-2106, Tyr-2108–Gln-2121, Tyr-2122–Ala-2145, Tyr-2148–Asn-2168, Tyr-2169–Leu-2189, Tyr-2191–Gly-2211, Tyr-2223–Tyr-2243, and Tyr-2245–Phe-2265. N-linked (GlcNAc...) asparagine glycosylation occurs at Asn-1937. N-linked (GlcNAc...) asparagine glycosylation is present at Asn-2140. Asn-2280 carries an N-linked (GlcNAc...) asparagine glycan. The YD 23 repeat unit spans residues Tyr-2291–Thr-2332. Asn-2592 is a glycosylation site (N-linked (GlcNAc...) asparagine).

It belongs to the tenascin family. Teneurin subfamily. In terms of assembly, homodimer; disulfide-linked; to mediate homophilic cell adhesion. Most isoforms (isoform-type A and type-B) can mediate homophilic interaction. Heterodimer with either TENM1 or TENM2. May also form heterodimer with TENM4. Isoform A0B0: Does not form homodimer to mediate homophilic cell adhesion. Isoform A0B0: Heterodimer with ADGRL3. As to expression, in brain, expressed in highly specific regions of the postnatal brain: expressed in restricted domains of the developing hippocampal region, including proximal CA1, distal subiculum, and medial entorhinal cortex (at protein level). Expression matches with topographic connectivity between entorhinal cortex, CA1, and subiculum (at protein level). Also specifically expressed in subregions of the presubiculum, parasubiculum, medial mammillary nucleus and anteroventral thalamic nucleus that are topographically connected with subiculum or entorhinal cortex (at protein level). Expressed in neurons of the developing visual pathway (at protein level). Expressed in the dorsal and ventral lateral geniculate nucleus (dLGN and vLGN) and optic tract at birth. Expressed in ipsilateral retinal axons of terminal zones (TZs) in the developing superior colliculus (SC) throughout the first postnatal week. Expressed in the layer V of the visual caudal cortex. Expressed in the femoral and mandibular condylar cartilages. Strongly expressed in fibrous and proliferating chondrocytes. Poorly expressed in mature chondrocytes. Not expressed in hypertrophic chondrocytes.

It is found in the cell membrane. It localises to the cell projection. The protein localises to the axon. Involved in neural development by regulating the establishment of proper connectivity within the nervous system. Acts in both pre- and postsynaptic neurons in the hippocampus to control the assembly of a precise topographic projection: required in both CA1 and subicular neurons for the precise targeting of proximal CA1 axons to distal subiculum, probably by promoting homophilic cell adhesion. Promotes homophilic adhesion in a splicing isoform-dependent manner: most isoforms (isoform-type A and type-B) can mediate homophilic interaction. Promotes axon guidance. Required for proper dendrite morphogenesis and axon targeting in the vertebrate visual system, thereby playing a key role in the development of the visual pathway. Regulates the formation in ipsilateral retinal mapping to both the dorsal lateral geniculate nucleus (dLGN) and the superior colliculus (SC). May also be involved in the differentiation of the fibroblast-like cells in the superficial layer of mandibular condylar cartilage into chondrocytes. The sequence is that of Teneurin-3 from Mus musculus (Mouse).